The chain runs to 390 residues: Type II methyltransferase M.SacI (390 aa).

Residues 5 to 371 (LPVISLFSGA…RALMEQLGYL (367 aa)) form the SAM-dependent MTase C5-type domain. Cys-96 is a catalytic residue.

It belongs to the class I-like SAM-binding methyltransferase superfamily. C5-methyltransferase family.

The catalysed reaction is a 2'-deoxycytidine in DNA + S-adenosyl-L-methionine = a 5-methyl-2'-deoxycytidine in DNA + S-adenosyl-L-homocysteine + H(+). In terms of biological role, a beta methylase recognizes the double-stranded sequence 5'-GAGCTC-3', methylates C-4 on both strands, and protects the DNA from cleavage by the SacI endonuclease. The sequence is that of Type II methyltransferase M.SacI from Streptomyces achromogenes.